The primary structure comprises 44 residues: MFKLFSTKWFRSAPVVATIWIVLTAGILVEWNRFVPDLLFHPGL.

A helical transmembrane segment spans residues 9 to 29 (WFRSAPVVATIWIVLTAGILV).

Belongs to the PsaJ family.

The protein localises to the cellular thylakoid membrane. Functionally, may help in the organization of the PsaE and PsaF subunits. This Prochlorococcus marinus (strain MIT 9211) protein is Photosystem I reaction center subunit IX.